Consider the following 98-residue polypeptide: UPF0251 protein SO_0727 (98 aa).

This sequence belongs to the UPF0251 family.

The sequence is that of UPF0251 protein SO_0727 from Shewanella oneidensis (strain ATCC 700550 / JCM 31522 / CIP 106686 / LMG 19005 / NCIMB 14063 / MR-1).